Consider the following 455-residue polypeptide: Beta-1,4-mannosyltransferase bre-3 (455 aa).

It belongs to the glycosyltransferase 2 family.

The protein localises to the cytoplasm. Its pathway is protein modification; protein glycosylation. Functionally, glycosyltransferase with a proposed role in glycosphingolipid biosynthesis. Involved in susceptibility to pore-forming crystal toxins in conjunction with bre-1, bre-2 and bre-4. Involved in resistance to the nematotoxic C.cinerea galectin Cgl2. Has a role in determining brood size. This is Beta-1,4-mannosyltransferase bre-3 from Caenorhabditis briggsae.